Reading from the N-terminus, the 352-residue chain is Peptide chain release factor 1 (352 aa).

Q230 carries the N5-methylglutamine modification.

This sequence belongs to the prokaryotic/mitochondrial release factor family. In terms of processing, methylated by PrmC. Methylation increases the termination efficiency of RF1.

It localises to the cytoplasm. Functionally, peptide chain release factor 1 directs the termination of translation in response to the peptide chain termination codons UAG and UAA. The chain is Peptide chain release factor 1 from Exiguobacterium sibiricum (strain DSM 17290 / CCUG 55495 / CIP 109462 / JCM 13490 / 255-15).